The primary structure comprises 145 residues: 3-hydroxyacyl-[acyl-carrier-protein] dehydratase FabZ (145 aa).

Residue His-48 is part of the active site.

Belongs to the thioester dehydratase family. FabZ subfamily.

It is found in the cytoplasm. The catalysed reaction is a (3R)-hydroxyacyl-[ACP] = a (2E)-enoyl-[ACP] + H2O. In terms of biological role, involved in unsaturated fatty acids biosynthesis. Catalyzes the dehydration of short chain beta-hydroxyacyl-ACPs and long chain saturated and unsaturated beta-hydroxyacyl-ACPs. This is 3-hydroxyacyl-[acyl-carrier-protein] dehydratase FabZ from Geobacillus sp. (strain WCH70).